The chain runs to 247 residues: Triosephosphate isomerase (247 aa).

Substrate is bound by residues Asn10 and Lys12. His94 acts as the Electrophile in catalysis. Residue Glu164 is the Proton acceptor of the active site.

This sequence belongs to the triosephosphate isomerase family. In terms of assembly, homodimer.

It catalyses the reaction D-glyceraldehyde 3-phosphate = dihydroxyacetone phosphate. It functions in the pathway carbohydrate biosynthesis; gluconeogenesis. The protein operates within carbohydrate degradation; glycolysis; D-glyceraldehyde 3-phosphate from glycerone phosphate: step 1/1. This is Triosephosphate isomerase (Tpi) from Drosophila melanogaster (Fruit fly).